The sequence spans 246 residues: MNPLISDFQTPQQRTPVIVALDFSNEKDTLGFVRNLDPTLCQIKIGKELFTATGRNLAESLINQGFKLFLDLKYHDIPHTVAQACKVAADMGVWMVDMHASGGRRMMEAAAEAVAGYGTKPLLIGVTVLTSMEQSDLAEIGLNTAPEEQVIRLAKLAQSSGLDGVVCSAQEAAPLRRELGQDFVLVTPGIRLDVADNNDDQRRIMTPAEALAAGSTYLVMGRPVTQAADPVAVLREVNRVANLEAN.

Residues Asp22, Lys44, 71 to 80, Thr130, Arg191, Gln201, Gly221, and Arg222 each bind substrate; that span reads DLKYHDIPHT. The Proton donor role is filled by Lys73.

It belongs to the OMP decarboxylase family. Type 1 subfamily. Homodimer.

The catalysed reaction is orotidine 5'-phosphate + H(+) = UMP + CO2. It participates in pyrimidine metabolism; UMP biosynthesis via de novo pathway; UMP from orotate: step 2/2. Catalyzes the decarboxylation of orotidine 5'-monophosphate (OMP) to uridine 5'-monophosphate (UMP). This is Orotidine 5'-phosphate decarboxylase from Neisseria meningitidis serogroup A / serotype 4A (strain DSM 15465 / Z2491).